The primary structure comprises 467 residues: MRLPRHIGPIHFVGIGGIGMSGIAEVLCNLGYTVQGSDASESANVNRLREKGIQIHVGHQADNIKGADVLVVSTAIKRDNPELLAARAQRIPVVRRAEMLAELMRLKSCVAIAGTHGKTTTTSMVAALLDAGDLDPTVINGGIINAYGTNARLGGGDWMVVEADESDGTFLKLPADVAIVTNVDPEHLDHFKTFDAVQDAFRNFVENVPFYGFAVMCIDHPVVQTLVGKIEDRRIITYGENPQADARLLDLAASGGGSTFKVAFRDRKAGTAHEIADLKLPMPGRHNALNATAAIAVAHELGLSDDTIRKALAAFGGVRRRFTKTGEWNGVTIIDDYGHHPVEIAAVLKAARQSTAGKVIAVVQPHRFSRLQSLFEEFCTCFNDADAVIVADVYPAGEAPIEGIDRDHFVLGLRAHGHRDVVALQDSASLAGVVAGLAHSGDYVVCLGAGNITQWAYALPGELKALG.

114–120 (GTHGKTT) lines the ATP pocket.

This sequence belongs to the MurCDEF family.

Its subcellular location is the cytoplasm. It carries out the reaction UDP-N-acetyl-alpha-D-muramate + L-alanine + ATP = UDP-N-acetyl-alpha-D-muramoyl-L-alanine + ADP + phosphate + H(+). Its pathway is cell wall biogenesis; peptidoglycan biosynthesis. Its function is as follows. Cell wall formation. The sequence is that of UDP-N-acetylmuramate--L-alanine ligase from Rhodopseudomonas palustris (strain ATCC BAA-98 / CGA009).